We begin with the raw amino-acid sequence, 313 residues long: MKVTIIGASGRVGSATALLLAKEPFMKDLVLIGREHSINKLEGLREDIYDALAGTRSDANIYVESDENLRIIDESDVVIITSGVPRKEGMSRMDLAKTNAKIVGKYAKKIAEICDTKIFVITNPVDVMTYKALVDSKFERNQVFGLGTHLDSLRFKVAIAKFFGVHIDEVRTRIIGEHGDSMVPLLSATSIGGIPIQKFERFKELPIDEIIEDVKTKGEQIIRLKGGSEFGPAAAILNVVRCIVNNEKRLLTLSAYVDGEFDGIRDVCIGVPVKIGRDGIEEVVSIELDKDEIIAFRKSAEIIKKYCEEVKNL.

NADP(+) is bound by residues 7-13 (GASGRVG) and 34-37 (REHS). Positions 86 and 92 each coordinate substrate. NADP(+) contacts are provided by residues Asn-99 and 121 to 123 (ITN). Asn-123 and Arg-154 together coordinate substrate. His-178 functions as the Proton acceptor in the catalytic mechanism.

The protein belongs to the LDH/MDH superfamily. In terms of assembly, homotetramer.

The protein localises to the cytoplasm. It catalyses the reaction a (2S)-2-hydroxycarboxylate + NAD(+) = a 2-oxocarboxylate + NADH + H(+). It carries out the reaction a (2S)-2-hydroxycarboxylate + NADP(+) = a 2-oxocarboxylate + NADPH + H(+). In terms of biological role, catalyzes the reversible oxidation of (S)-malate and (S)-sulfolactate to oxaloacetate and sulfopyruvate, respectively. Can use both NADH and NADPH, although activity is higher with NADPH. Oxidation of (S)-sulfolactate is observed only in the presence of NADP(+). Can also oxidize tartrate. Cannot reduce pyruvate, nor alpha-ketoglutarate. The sequence is that of L-2-hydroxycarboxylate dehydrogenase (NAD(P)(+)) (mdh) from Methanocaldococcus jannaschii (strain ATCC 43067 / DSM 2661 / JAL-1 / JCM 10045 / NBRC 100440) (Methanococcus jannaschii).